Consider the following 431-residue polypeptide: Neuronal pentraxin-2 (431 aa).

Residues 1 to 15 (MLALLAASVALAVAA) form the signal peptide. Asparagine 148 and asparagine 189 each carry an N-linked (GlcNAc...) asparagine glycan. Residues 223 to 424 (DAFKVSLPLR…GASKWPVETC (202 aa)) enclose the Pentraxin (PTX) domain. Cysteine 253 and cysteine 313 are disulfide-bonded. Asparagine 277, glutamate 355, glutamine 356, aspartate 357, and glutamine 367 together coordinate Ca(2+). Residue asparagine 393 is glycosylated (N-linked (GlcNAc...) asparagine).

As to quaternary structure, homooligomer or heterooligomer (probably pentamer) with neuronal pentraxin receptor (NPTXR). The cofactor is Ca(2+). In terms of tissue distribution, brain, pancreas, liver, heart and skeletal muscle. Highest levels are seen in the testis.

The protein localises to the secreted. Its function is as follows. Likely to play role in the modification of cellular properties that underlie long-term plasticity. Binds to agar matrix in a calcium-dependent manner. The sequence is that of Neuronal pentraxin-2 (NPTX2) from Homo sapiens (Human).